The primary structure comprises 90 residues: Trp-8 progonadoliberin (90 aa).

The N-terminal stretch at 1–24 (MSRHVTVVLLLAVVLLLSSHMSHG) is a signal peptide. A Pyrrolidone carboxylic acid modification is found at Gln25. At Gly34 the chain carries Glycine amide.

Belongs to the GnRH family. Expressed in forebrain but not in testis, ovary, kidney and liver.

The protein localises to the secreted. Stimulates the secretion of gonadotropins. The polypeptide is Trp-8 progonadoliberin (Rana dybowskii (Dybovsky's frog)).